The chain runs to 355 residues: Peptide chain release factor 1 (355 aa).

Gln231 bears the N5-methylglutamine mark. The interval 283-303 is disordered; the sequence is NAQNKEARKTQVGSGDRSERI.

It belongs to the prokaryotic/mitochondrial release factor family. Post-translationally, methylated by PrmC. Methylation increases the termination efficiency of RF1.

It is found in the cytoplasm. Functionally, peptide chain release factor 1 directs the termination of translation in response to the peptide chain termination codons UAG and UAA. The chain is Peptide chain release factor 1 from Helicobacter hepaticus (strain ATCC 51449 / 3B1).